We begin with the raw amino-acid sequence, 420 residues long: MWGENIATADLFANATDIHSIVQALTTLANASDVFFLVVMGVLVFMMQWGFAMLEGGQVRKKNVNNVMMKNMVDWLIGCVAWLFIGGILCSKGFDLSAFIDWWKQILGTNWPNNGLDLASWFFGLVFCATAATIVSGGVAERIKFSAYVLISLIITGLLYPLFVYLGPWGASIVPWHDYAGSLVVHGLGGFLALGAIAALGPRIGRFVDGRPVPILGHNIPMAVFGAFALAIGWYGFNVGSSLALGDISGLVCATTTMAMAGGGIGALIASRNDVLFTANGIVAGLVAICSGTDVVSPIGGLIIGLIAGLQVPIVYKLVEKAGLDDVCGVVPVHGTAGVIGAILTGILGLKIFGGAGGVSLIDQIIGAVFCIIYGTGLGYILAKIVGIALGGLRVSEEEEKMGLDMAEHKMPAYPEETVI.

Transmembrane regions (helical) follow at residues 34-54 (VFFLVVMGVLVFMMQWGFAML), 71-91 (NMVDWLIGCVAWLFIGGILCS), 120-140 (SWFFGLVFCATAATIVSGGVA), 149-169 (VLISLIITGLLYPLFVYLGPW), 180-200 (AGSLVVHGLGGFLALGAIAAL), 220-240 (IPMAVFGAFALAIGWYGFNVG), 250-270 (GLVCATTTMAMAGGGIGALIA), 273-293 (NDVLFTANGIVAGLVAICSGT), 295-315 (VVSPIGGLIIGLIAGLQVPIV), 339-359 (VIGAILTGILGLKIFGGAGGV), and 365-385 (IIGAVFCIIYGTGLGYILAKI).

It belongs to the ammonia transporter channel (TC 1.A.11.2) family. As to quaternary structure, homotrimer. Interacts and forms a complex with GlnK2.

Its subcellular location is the cell membrane. Involved in the uptake of ammonium/ammonia (NH(4)(+)/NH(3)). Transport is electrogenic. This is Ammonium transporter Amt2 from Methanocaldococcus jannaschii (strain ATCC 43067 / DSM 2661 / JAL-1 / JCM 10045 / NBRC 100440) (Methanococcus jannaschii).